The following is a 295-amino-acid chain: Pyridoxal 5'-phosphate synthase subunit PdxS (295 aa).

Asp25 lines the D-ribose 5-phosphate pocket. Residue Lys82 is the Schiff-base intermediate with D-ribose 5-phosphate of the active site. Gly154 is a binding site for D-ribose 5-phosphate. Arg166 contacts D-glyceraldehyde 3-phosphate. Residues Gly215 and 236-237 (GS) each bind D-ribose 5-phosphate.

The protein belongs to the PdxS/SNZ family. As to quaternary structure, in the presence of PdxT, forms a dodecamer of heterodimers.

It carries out the reaction aldehydo-D-ribose 5-phosphate + D-glyceraldehyde 3-phosphate + L-glutamine = pyridoxal 5'-phosphate + L-glutamate + phosphate + 3 H2O + H(+). It functions in the pathway cofactor biosynthesis; pyridoxal 5'-phosphate biosynthesis. Catalyzes the formation of pyridoxal 5'-phosphate from ribose 5-phosphate (RBP), glyceraldehyde 3-phosphate (G3P) and ammonia. The ammonia is provided by the PdxT subunit. Can also use ribulose 5-phosphate and dihydroxyacetone phosphate as substrates, resulting from enzyme-catalyzed isomerization of RBP and G3P, respectively. The chain is Pyridoxal 5'-phosphate synthase subunit PdxS from Bacillus cytotoxicus (strain DSM 22905 / CIP 110041 / 391-98 / NVH 391-98).